A 1922-amino-acid chain; its full sequence is Kinesin-related protein 4 (1922 aa).

The Kinesin motor domain maps to 22–343 (KIKVAIRVRP…LQFAKRAKRV (322 aa)). 101–108 (GQTSSGKT) contributes to the ATP binding site. The segment at 448-538 (QKIKKIKNSE…DDEFKDNLNL (91 aa)) is disordered. The span at 456–468 (SENNISSSSSNSS) shows a compositional bias: low complexity. Composition is skewed to acidic residues over residues 469 to 480 (GEEDDDDKDDEN) and 488 to 532 (DKDD…DDEF). A coiled-coil region spans residues 562 to 1712 (QVKVKREDLD…ELESTKQKNL (1151 aa)). Positions 1887-1922 (TSTDNLTTTSTSLKSKSSSNGENKENQNNNIIIKNN) are disordered.

Belongs to the TRAFAC class myosin-kinesin ATPase superfamily. Kinesin family.

The protein resides in the cytoplasm. It localises to the cytoskeleton. In terms of biological role, microtubule-associated force-producing protein that plays a role in organelle transport. Its motor activity is directed toward the microtubule's plus end. Cooperates with dynein in organizing spindle assembly during cell division. This chain is Kinesin-related protein 4 (kif4), found in Dictyostelium discoideum (Social amoeba).